A 666-amino-acid chain; its full sequence is Adenylylsulfate reductase subunit alpha (666 aa).

FAD contacts are provided by residues 32 to 35 (GGMG), 60 to 61 (DK), 67 to 69 (SGA), Asn-78, Ile-193, Ser-259, Ser-417, 461 to 462 (AD), and Ser-472.

Belongs to the FAD-dependent oxidoreductase 2 family. Heterodimer composed of AprA and AprB. The heterodimers can dimerize to form heterotetramers. The cofactor is FAD.

The protein localises to the cytoplasm. The enzyme catalyses sulfite + A + AMP + 2 H(+) = adenosine 5'-phosphosulfate + AH2. Functionally, catalytic subunit of the adenylylsulfate reductase which catalyzes reversibly the reduction of adenosine 5'-phosphosulfate (APS) to sulfite and AMP during dissimilatory sulfate reduction. This chain is Adenylylsulfate reductase subunit alpha, found in Megalodesulfovibrio gigas (strain ATCC 19364 / DSM 1382 / NCIMB 9332 / VKM B-1759) (Desulfovibrio gigas).